The chain runs to 232 residues: 7-cyano-7-deazaguanine synthase (232 aa).

7–17 (CSGGLDSVSLA) contacts ATP. Zn(2+)-binding residues include cysteine 185, cysteine 193, cysteine 196, and cysteine 199.

This sequence belongs to the QueC family. Zn(2+) is required as a cofactor.

The catalysed reaction is 7-carboxy-7-deazaguanine + NH4(+) + ATP = 7-cyano-7-deazaguanine + ADP + phosphate + H2O + H(+). The protein operates within purine metabolism; 7-cyano-7-deazaguanine biosynthesis. Catalyzes the ATP-dependent conversion of 7-carboxy-7-deazaguanine (CDG) to 7-cyano-7-deazaguanine (preQ(0)). The chain is 7-cyano-7-deazaguanine synthase from Brucella abortus (strain S19).